A 219-amino-acid chain; its full sequence is MKKEKAVVVFSGGQDSTTCLLWALQNFEEVETVTFHYNQRHQEEIDVAKSIAEKLGVKNHLLDMSLLNQLAPNALTRDDIEIEAKDGELPTTFVPGRNLVFLSFASILAYQIGARHIITGVCETDFSGYPDCRDEFVKSCNVTVNLAMEKPFVIHTPLMWLNKAETWKLADELGALDFVKNNTLTCYNGIIADGCGECPACLLRNKGYDEYMKMKGERN.

10 to 20 provides a ligand contact to ATP; sequence FSGGQDSTTCL. 4 residues coordinate Zn(2+): Cys186, Cys195, Cys198, and Cys201.

This sequence belongs to the QueC family. Homodimer. It depends on Zn(2+) as a cofactor.

It catalyses the reaction 7-carboxy-7-deazaguanine + NH4(+) + ATP = 7-cyano-7-deazaguanine + ADP + phosphate + H2O + H(+). It functions in the pathway purine metabolism; 7-cyano-7-deazaguanine biosynthesis. Catalyzes the ATP-dependent conversion of 7-carboxy-7-deazaguanine (CDG) to 7-cyano-7-deazaguanine (preQ(0)). This chain is 7-cyano-7-deazaguanine synthase, found in Bacillus velezensis (strain DSM 23117 / BGSC 10A6 / LMG 26770 / FZB42) (Bacillus amyloliquefaciens subsp. plantarum).